Consider the following 417-residue polypeptide: Ribonucleoside-diphosphate reductase small chain (417 aa).

Fe cation contacts are provided by Asp168, Glu199, and His202. Tyr206 is an active-site residue. Positions 261, 297, and 300 each coordinate Fe cation.

Belongs to the ribonucleoside diphosphate reductase small chain family. Heterotetramer composed of a homodimer of the large subunit (R1) and a homodimer of the small subunit (R2). Larger multisubunit protein complex are also active, composed of (R1)n(R2)n. Fe cation is required as a cofactor.

It carries out the reaction a 2'-deoxyribonucleoside 5'-diphosphate + [thioredoxin]-disulfide + H2O = a ribonucleoside 5'-diphosphate + [thioredoxin]-dithiol. Ribonucleoside-diphosphate reductase holoenzyme provides the precursors necessary for viral DNA synthesis. Allows virus growth in non-dividing cells. Catalyzes the biosynthesis of deoxyribonucleotides from the corresponding ribonucleotides. The sequence is that of Ribonucleoside-diphosphate reductase small chain (RNR2) from Acanthamoeba polyphaga mimivirus (APMV).